Consider the following 295-residue polypeptide: NAD kinase (295 aa).

The active-site Proton acceptor is aspartate 72. NAD(+) is bound by residues 72–73 (DG), 146–147 (ND), arginine 157, lysine 174, aspartate 176, 187–192 (TAYALS), and glutamine 247.

It belongs to the NAD kinase family. The cofactor is a divalent metal cation.

Its subcellular location is the cytoplasm. It catalyses the reaction NAD(+) + ATP = ADP + NADP(+) + H(+). Involved in the regulation of the intracellular balance of NAD and NADP, and is a key enzyme in the biosynthesis of NADP. Catalyzes specifically the phosphorylation on 2'-hydroxyl of the adenosine moiety of NAD to yield NADP. This is NAD kinase from Pseudomonas aeruginosa (strain LESB58).